The following is a 311-amino-acid chain: Ketoisovalerate oxidoreductase subunit VorB (311 aa).

In terms of assembly, heterotetramer of one alpha, one beta, one delta and one gamma chain.

It catalyses the reaction 3-methyl-2-oxobutanoate + 2 oxidized [2Fe-2S]-[ferredoxin] + CoA = 2-methylpropanoyl-CoA + 2 reduced [2Fe-2S]-[ferredoxin] + CO2 + H(+). The chain is Ketoisovalerate oxidoreductase subunit VorB (vorB) from Pyrococcus horikoshii (strain ATCC 700860 / DSM 12428 / JCM 9974 / NBRC 100139 / OT-3).